Consider the following 316-residue polypeptide: Protoheme IX farnesyltransferase (316 aa).

Transmembrane regions (helical) follow at residues 29–49 (IIPL…EGRV), 54–74 (LLIT…LNCI), 102–122 (LIFA…FVNV), 123–143 (LSGC…THWL), 151–171 (IVIG…AVTG), 179–199 (VLFA…ALMI), 224–241 (IWYY…LVYP), 245–267 (LGIL…AWQL), and 283–303 (FSIF…LPVT).

It belongs to the UbiA prenyltransferase family. Protoheme IX farnesyltransferase subfamily.

The protein localises to the cell inner membrane. It catalyses the reaction heme b + (2E,6E)-farnesyl diphosphate + H2O = Fe(II)-heme o + diphosphate. It functions in the pathway porphyrin-containing compound metabolism; heme O biosynthesis; heme O from protoheme: step 1/1. Functionally, converts heme B (protoheme IX) to heme O by substitution of the vinyl group on carbon 2 of heme B porphyrin ring with a hydroxyethyl farnesyl side group. In Synechocystis sp. (strain ATCC 27184 / PCC 6803 / Kazusa), this protein is Protoheme IX farnesyltransferase.